A 201-amino-acid polypeptide reads, in one-letter code: Ras-related protein Rab-9B (201 aa).

GTP contacts are provided by V18, G19, K20, S21, S22, D33, S34, A36, H38, and T39. A Mg(2+)-binding site is contributed by S21. The Switch 1 motif lies at 31–42 (KFDSQAFHTIGV). Position 34 is a phosphoserine (S34). Residues T39 and D62 each coordinate Mg(2+). The Switch 2 signature appears at 64-78 (AGQERFKSLRTPFYR). GTP-binding residues include G65, N124, K125, A155, and K156. S-geranylgeranyl cysteine attachment occurs at residues C200 and C201.

Belongs to the small GTPase superfamily. Rab family. Interacts (GTP-bound form) with SGSM1; the GDP-bound form has much lower affinity for SGSM1. The GTP-bound form but not the GDP-bound form interacts with HPS4 and the BLOC-3 complex (heterodimer of HPS1 and HPS4) but does not interact with HPS1 alone. Interacts (GTP-bound form) with NDE1. Mg(2+) is required as a cofactor. In terms of tissue distribution, ubiquitous.

The protein resides in the cell membrane. Its subcellular location is the cytoplasmic vesicle. The protein localises to the phagosome. It is found in the phagosome membrane. It carries out the reaction GTP + H2O = GDP + phosphate + H(+). Its activity is regulated as follows. Regulated by guanine nucleotide exchange factors (GEFs) which promote the exchange of bound GDP for free GTP. Regulated by GTPase activating proteins (GAPs) which increase the GTP hydrolysis activity. Inhibited by GDP dissociation inhibitors (GDIs). The small GTPases Rab are key regulators of intracellular membrane trafficking, from the formation of transport vesicles to their fusion with membranes. Rabs cycle between an inactive GDP-bound form and an active GTP-bound form that is able to recruit to membranes different sets of downstream effectors directly responsible for vesicle formation, movement, tethering and fusion. RAB9B is involved in the transport of proteins between the endosomes and the trans Golgi network. May use NDE1/NDEL1 as an effector to interact with the dynein motor complex in order to control retrograde trafficking of RAB9-associated late endosomes to the TGN. In Homo sapiens (Human), this protein is Ras-related protein Rab-9B.